The chain runs to 410 residues: Protein LTV1 homolog (410 aa).

2 disordered regions span residues 142–165 and 325–378; these read VYRS…DEMY and EMDI…ARKL. Composition is skewed to acidic residues over residues 151–165 and 325–345; these read DSEE…DEMY and EMDI…DDDK. Residues 357–366 show a composition bias toward basic and acidic residues; sequence PKNETPEQRS. The stretch at 363-389 forms a coiled coil; the sequence is EQRSLRKKAVKEARKLRRVEKKANKTM. Residues 367–378 show a composition bias toward basic residues; that stretch reads LRKKAVKEARKL.

It belongs to the LTV1 family.

The chain is Protein LTV1 homolog from Caenorhabditis elegans.